The following is a 385-amino-acid chain: Benzoylsuccinyl-CoA thiolase subunit BbsB (385 aa).

Arg-19 contributes to the CoA binding site. Cys-84 (acyl-thioester intermediate) is an active-site residue. Residues Gly-121, Arg-193, Cys-204, and Cys-205 each contribute to the CoA site.

This sequence belongs to the thiolase-like superfamily. Thiolase family. In terms of assembly, heterotetramer composed of two BbsA subunits and two BbsB subunits. BbsB forms homodimeric subcomplexes. Both BbsA and BbsB are essential for enzymatic activity.

It carries out the reaction (S)-2-benzoylsuccinyl-CoA + CoA = benzoyl-CoA + succinyl-CoA. The protein operates within xenobiotic degradation; toluene degradation. In terms of biological role, component of the BbsAB thiolase complex, which catalyzes the thiolytic cleavage of (S)-2-benzoylsuccinyl-CoA to succinyl-CoA and benzoyl-CoA, the final step of anaerobic toluene metabolism. This is Benzoylsuccinyl-CoA thiolase subunit BbsB from Thauera aromatica.